We begin with the raw amino-acid sequence, 200 residues long: Cytochrome c biogenesis ATP-binding export protein CcmA (200 aa).

The ABC transporter domain maps to 1–200; sequence MRLSGNGLRC…ARELRIGGAA (200 aa). 35 to 42 provides a ligand contact to ATP; sequence GPNGAGKT.

The protein belongs to the ABC transporter superfamily. CcmA exporter (TC 3.A.1.107) family. As to quaternary structure, the complex is composed of two ATP-binding proteins (CcmA) and two transmembrane proteins (CcmB).

It localises to the cell inner membrane. It carries out the reaction heme b(in) + ATP + H2O = heme b(out) + ADP + phosphate + H(+). In terms of biological role, part of the ABC transporter complex CcmAB involved in the biogenesis of c-type cytochromes; once thought to export heme, this seems not to be the case, but its exact role is uncertain. Responsible for energy coupling to the transport system. In Nitrobacter winogradskyi (strain ATCC 25391 / DSM 10237 / CIP 104748 / NCIMB 11846 / Nb-255), this protein is Cytochrome c biogenesis ATP-binding export protein CcmA.